Here is a 477-residue protein sequence, read N- to C-terminus: Adenosylhomocysteinase (477 aa).

Substrate contacts are provided by Thr63, Asp142, and Glu202. 203-205 (TTT) lines the NAD(+) pocket. Substrate contacts are provided by Lys232 and Asp236. Residues Asn237, 266–271 (GYGDVG), Glu289, Asn324, 345–347 (IGH), and Asn390 contribute to the NAD(+) site.

Belongs to the adenosylhomocysteinase family. It depends on NAD(+) as a cofactor.

The protein resides in the cytoplasm. The enzyme catalyses S-adenosyl-L-homocysteine + H2O = L-homocysteine + adenosine. Its pathway is amino-acid biosynthesis; L-homocysteine biosynthesis; L-homocysteine from S-adenosyl-L-homocysteine: step 1/1. Its function is as follows. May play a key role in the regulation of the intracellular concentration of adenosylhomocysteine. The polypeptide is Adenosylhomocysteinase (Leptothrix cholodnii (strain ATCC 51168 / LMG 8142 / SP-6) (Leptothrix discophora (strain SP-6))).